An 87-amino-acid chain; its full sequence is Mu-conotoxin cal12b (87 aa).

A signal peptide spans Met1–Leu19. The propeptide occupies Ile20–Arg42. Intrachain disulfides connect Cys45–Cys58, Cys53–Cys70, Cys60–Cys75, and Cys69–Cys81. The residue at position 59 (Trp59) is a 6'-bromotryptophan. Position 65 is a 4-hydroxyproline (Pro65). 6'-bromotryptophan is present on residues Trp79 and Trp80. 4-hydroxyproline is present on Pro82. At Trp86 the chain carries 6'-bromotryptophan.

As to expression, expressed by the venom duct.

The protein resides in the secreted. Mu-conotoxins block voltage-gated sodium channels. This toxin reversibly blocks voltage-gated sodium channel in cephalopods (tested on squid giant-fiber-lobe neurons) with an inhibitor constant (Ki) of 15 nmol/l, with no alteration in the voltage dependence of sodium conductance or on the kinetics of inactivation. Has no effect on sodium channels of the two gastropod S.luhuanus and A.californica (which are not natural prey). This is Mu-conotoxin cal12b from Californiconus californicus (California cone).